Here is a 91-residue protein sequence, read N- to C-terminus: uncharacterized protein (91 aa).

Transmembrane regions (helical) follow at residues 5 to 27 (FFKY…TNFQ) and 47 to 69 (DFYH…FIFF).

The protein resides in the cell membrane. This is an uncharacterized protein from Archaeoglobus fulgidus (strain ATCC 49558 / DSM 4304 / JCM 9628 / NBRC 100126 / VC-16).